A 402-amino-acid chain; its full sequence is Argininosuccinate synthase (402 aa).

Residues 10–18 (AYSGGLDTS) and alanine 38 contribute to the ATP site. An L-citrulline-binding site is contributed by tyrosine 90. Residue glycine 120 coordinates ATP. 3 residues coordinate L-aspartate: threonine 122, asparagine 126, and aspartate 127. An L-citrulline-binding site is contributed by asparagine 126. 5 residues coordinate L-citrulline: arginine 130, serine 179, serine 188, glutamate 264, and tyrosine 276.

This sequence belongs to the argininosuccinate synthase family. Type 1 subfamily. As to quaternary structure, homotetramer.

It is found in the cytoplasm. It catalyses the reaction L-citrulline + L-aspartate + ATP = 2-(N(omega)-L-arginino)succinate + AMP + diphosphate + H(+). It participates in amino-acid biosynthesis; L-arginine biosynthesis; L-arginine from L-ornithine and carbamoyl phosphate: step 2/3. This Psychromonas ingrahamii (strain DSM 17664 / CCUG 51855 / 37) protein is Argininosuccinate synthase.